We begin with the raw amino-acid sequence, 506 residues long: Gamma-aminobutyric acid receptor subunit epsilon (506 aa).

The N-terminal stretch at 1–17 is a signal peptide; that stretch reads MLPKVLLMLLNMFLALQ. The Extracellular portion of the chain corresponds to 18–277; sequence WRVGPHIKLE…MTFFFNVSRR (260 aa). Residues 32-65 are disordered; sequence AQDKVVFGPQPQPSGKKLPARETELTADHTTERP. Over residues 50–65 the composition is skewed to basic and acidic residues; it reads PARETELTADHTTERP. N-linked (GlcNAc...) asparagine glycosylation is present at Asn-135. A disulfide bridge links Cys-196 with Cys-210. Asn-253 carries an N-linked (GlcNAc...) asparagine glycan. Residues 278–298 form a helical membrane-spanning segment; the sequence is FGFIVFQNYIPSSVTTMLSWV. Residues 299–308 lie on the Cytoplasmic side of the membrane; sequence SFWIKIEAAA. Residues 309–328 traverse the membrane as a helical segment; it reads ARASVGVSSVLTMATLGTFS. Residues 329–344 lie on the Extracellular side of the membrane; the sequence is RKNFPRVSYLTALDFY. The helical transmembrane segment at 345–365 threads the bilayer; the sequence is IAICFVLCFCTLLEFTVLNFL. At 366-485 the chain is on the cytoplasmic side; that stretch reads TYNNIERQAS…HVYRLDNYSR (120 aa). Residues 486-506 traverse the membrane as a helical segment; sequence VLFPITFFFFNVVYWVICLNL.

Belongs to the ligand-gated ion channel (TC 1.A.9) family. Gamma-aminobutyric acid receptor (TC 1.A.9.5) subfamily. GABRE sub-subfamily. In terms of assembly, heteropentamer, formed by a combination of alpha (GABRA1-6), beta (GABRB1-3), gamma (GABRG1-3), delta (GABRD), epsilon (GABRE), rho (GABRR1-3), pi (GABRP) and theta (GABRQ) chains, each subunit exhibiting distinct physiological and pharmacological properties. In terms of tissue distribution, expressed in brain and heart. Strongly expressed in locus ceruleus from the first postnatal day. Weakly expressed in other brainstem nuclei and in the hypothalamus. Found in the cerebral cortex of pups.

The protein localises to the cell membrane. The protein resides in the postsynaptic cell membrane. It catalyses the reaction chloride(in) = chloride(out). Its function is as follows. Epsilon subunit of the heteropentameric ligand-gated chloride channel gated by gamma-aminobutyric acid (GABA), a major inhibitory neurotransmitter in the brain. GABA-gated chloride channels, also named GABA(A) receptors (GABAAR), consist of five subunits arranged around a central pore and contain GABA active binding site(s) located at the alpha and beta subunit interfaces. When activated by GABA, GABAARs selectively allow the flow of chloride anions across the cell membrane down their electrochemical gradient. GABARs containing epsilon subunit may also permit spontaneous chloride channel activity while preserving the structural information required for GABA-gated openings. GABARs containing epsilon subunit may regulate cardiac function. The chain is Gamma-aminobutyric acid receptor subunit epsilon from Rattus norvegicus (Rat).